An 894-amino-acid chain; its full sequence is Desmocollin-1 (894 aa).

The signal sequence occupies residues 1-29 (MALASAAPGSIFCKQLLFSLLVLTLLCDA). The propeptide occupies 30–134 (CQKVYLRVPS…KDTALKRSKR (105 aa)). Cadherin domains follow at residues 135–242 (RWAP…APYF), 243–354 (EHRV…PPSF), 355–471 (TETS…GPEC), 472–575 (HPPV…DHAP), and 576–682 (QIDK…STRD). Topologically, residues 135–691 (RWAPIPASLM…DVRPNVILGR (557 aa)) are extracellular. N165 is a glycosylation site (N-linked (GlcNAc...) asparagine). Position 385 is a phosphothreonine (T385). N546 is a glycosylation site (N-linked (GlcNAc...) asparagine). A helical membrane pass occupies residues 692–714 (WAILAMVLGSVLLLCILFTCFCV). Residues 715 to 894 (TAKRTVKKCF…RTLAKTCIKK (180 aa)) are Cytoplasmic-facing.

In terms of assembly, binds to JUP/plakoglobin. Strongly expressed in epidermis, less in lymph node and tongue.

The protein localises to the cell membrane. It localises to the cell junction. It is found in the desmosome. Its function is as follows. A component of desmosome cell-cell junctions which are required for positive regulation of cellular adhesion. Required for desmosome adhesion strength between the granular layers of the epidermis, as a result moderates epidermal proliferation and differentiation. Is therefore required to maintain postnatal epidermal barrier function and normal hair follicle morphology into adulthood. This Homo sapiens (Human) protein is Desmocollin-1 (DSC1).